Reading from the N-terminus, the 128-residue chain is Small ribosomal subunit protein uS11 (128 aa).

This sequence belongs to the universal ribosomal protein uS11 family. In terms of assembly, part of the 30S ribosomal subunit. Interacts with proteins S7 and S18. Binds to IF-3.

Functionally, located on the platform of the 30S subunit, it bridges several disparate RNA helices of the 16S rRNA. Forms part of the Shine-Dalgarno cleft in the 70S ribosome. The sequence is that of Small ribosomal subunit protein uS11 from Methylococcus capsulatus (strain ATCC 33009 / NCIMB 11132 / Bath).